A 153-amino-acid chain; its full sequence is Movement protein (153 aa).

Residues 107–153 (SSSARPLPQQPAPSLTSWTPIAKHLHSHQQSISSQSPKLVRGASQRR) form a disordered region.

The protein belongs to the luteoviruses movement protein family.

In terms of biological role, transports viral genome to neighboring plant cells directly through plasmosdesmata, without any budding. The movement protein allows efficient cell to cell propagation, by bypassing the host cell wall barrier. The polypeptide is Movement protein (Avena byzantina (Oat)).